We begin with the raw amino-acid sequence, 1213 residues long: tRNA wybutosine-synthesizing protein 4 (1213 aa).

Composition is skewed to low complexity over residues 1-13 (METTEEVVAPATT) and 39-52 (ATTTTTTTDGTTPT). A disordered region spans residues 1–76 (METTEEVVAP…DDQVMGTNNS (76 aa)). The segment covering 53–67 (HNEHASAKDPRKAQD) has biased composition (basic and acidic residues). 3 residues coordinate S-adenosyl-L-methionine: Arg117, Gly148, and Asp180. The segment covering 215–248 (STPAATTTAAATTTTTTELKTTAATASSTSTEAP) has biased composition (low complexity). The segment at 215–272 (STPAATTTAAATTTTTTELKTTAATASSTSTEAPQKPKKSPKPKDKSKAARAPAPTTA) is disordered. S-adenosyl-L-methionine contacts are provided by residues 289–290 (DL) and Glu318. The interval 879–900 (EPRSLPLRNQAPNGAEGNANGS) is disordered. One can recognise a JmjC domain in the interval 1006-1166 (PTEKPAVLSD…YAAGKDVYGN (161 aa)).

This sequence belongs to the methyltransferase superfamily. LCMT family.

It catalyses the reaction 7-[(3S)-3-amino-3-carboxypropyl]wyosine(37) in tRNA(Phe) + S-adenosyl-L-methionine = 7-[(3S)-(3-amino-3-methoxycarbonyl)propyl]wyosine(37) in tRNA(Phe) + S-adenosyl-L-homocysteine. The catalysed reaction is 7-[(3S)-(3-amino-3-methoxycarbonyl)propyl]wyosine(37) in tRNA(Phe) + S-adenosyl-L-methionine + CO2 = wybutosine(37) in tRNA(Phe) + S-adenosyl-L-homocysteine + 2 H(+). The protein operates within tRNA modification; wybutosine-tRNA(Phe) biosynthesis. Its function is as follows. Probable S-adenosyl-L-methionine-dependent methyltransferase that acts as a component of the wybutosine biosynthesis pathway. Wybutosine is a hyper modified guanosine with a tricyclic base found at the 3'-position adjacent to the anticodon of eukaryotic phenylalanine tRNA. May methylate the carboxyl group of leucine residues to form alpha-leucine ester residues. The protein is tRNA wybutosine-synthesizing protein 4 (lcm-2) of Neurospora crassa (strain ATCC 24698 / 74-OR23-1A / CBS 708.71 / DSM 1257 / FGSC 987).